The sequence spans 171 residues: Cytochrome c oxidase subunit 5b-2, mitochondrial (171 aa).

The N-terminal 54 residues, Met-1–Ile-54, are a transit peptide targeting the mitochondrion. Residues Cys-121, Cys-145, and Cys-148 each contribute to the Zn(2+) site.

This sequence belongs to the cytochrome c oxidase subunit 5B (TC 3.D.4.11) family.

The protein resides in the mitochondrion inner membrane. Its function is as follows. This protein is one of the nuclear-coded polypeptide chains of cytochrome c oxidase, the terminal oxidase in mitochondrial electron transport. The protein is Cytochrome c oxidase subunit 5b-2, mitochondrial (COX5B-2) of Arabidopsis thaliana (Mouse-ear cress).